Here is a 90-residue protein sequence, read N- to C-terminus: Probable small nuclear ribonucleoprotein E (90 aa).

In terms of domain architecture, Sm spans 14–89 (VNLIFRYLQN…ITLIHAAQQE (76 aa)).

This sequence belongs to the snRNP Sm proteins family. As to quaternary structure, core component of the spliceosomal U1, U2, U4 and U5 small nuclear ribonucleoproteins (snRNPs), the building blocks of the spliceosome.

Its subcellular location is the nucleus. It localises to the cytoplasm. It is found in the cytosol. Plays a role in pre-mRNA splicing as a core component of the spliceosomal U1, U2, U4 and U5 small nuclear ribonucleoproteins (snRNPs), the building blocks of the spliceosome. The protein is Probable small nuclear ribonucleoprotein E (snr-6) of Caenorhabditis elegans.